Reading from the N-terminus, the 155-residue chain is Small ribosomal subunit protein uS7c (155 aa).

The protein belongs to the universal ribosomal protein uS7 family. Part of the 30S ribosomal subunit.

Its subcellular location is the plastid. It localises to the chloroplast. In terms of biological role, one of the primary rRNA binding proteins, it binds directly to 16S rRNA where it nucleates assembly of the head domain of the 30S subunit. The protein is Small ribosomal subunit protein uS7c (rps7) of Silene latifolia (White campion).